The primary structure comprises 161 residues: Nucleotide-binding protein XOO0647 (161 aa).

This sequence belongs to the YajQ family.

Functionally, nucleotide-binding protein. The sequence is that of Nucleotide-binding protein XOO0647 from Xanthomonas oryzae pv. oryzae (strain MAFF 311018).